The sequence spans 86 residues: Neurotoxin LmNaTx17 (86 aa).

Residues 1–18 (MKILFVIVLAAFFIGVHC) form the signal peptide. Residues 19 to 85 (KHGYPVQYSG…TWDYKTGKCR (67 aa)) enclose the LCN-type CS-alpha/beta domain. Disulfide bonds link C33-C84, C37-C58, C44-C65, and C48-C67.

It belongs to the long (4 C-C) scorpion toxin superfamily. Sodium channel inhibitor family. Beta subfamily. As to expression, expressed by the venom gland.

It localises to the secreted. Functionally, binds voltage-independently at site-4 of sodium channels (Nav) and shift the voltage of activation toward more negative potentials thereby affecting sodium channel activation and promoting spontaneous and repetitive firing. The protein is Neurotoxin LmNaTx17 of Lychas mucronatus (Chinese swimming scorpion).